The chain runs to 378 residues: Cytochrome b (378 aa).

Helical transmembrane passes span 34-54 (FGSL…FLAM), 78-99 (WLLR…YLHV), 114-134 (WLVG…GYVL), and 179-199 (FFTF…IHIL). Heme b is bound by residues His84 and His98. The heme b site is built by His183 and His197. A ubiquinone is bound at residue His202. The next 4 helical transmembrane spans lie at 227–247 (FKDI…VLIN), 289–309 (LGGV…PFYH), 321–341 (INQI…WIGA), and 348–368 (YVLV…FNPL).

This sequence belongs to the cytochrome b family. In terms of assembly, the main subunits of complex b-c1 are: cytochrome b, cytochrome c1 and the Rieske protein. Requires heme b as cofactor.

It is found in the mitochondrion inner membrane. Component of the ubiquinol-cytochrome c reductase complex (complex III or cytochrome b-c1 complex) that is part of the mitochondrial respiratory chain. The b-c1 complex mediates electron transfer from ubiquinol to cytochrome c. Contributes to the generation of a proton gradient across the mitochondrial membrane that is then used for ATP synthesis. The polypeptide is Cytochrome b (MT-CYB) (Cochliomyia hominivorax (Primary screw-worm)).